We begin with the raw amino-acid sequence, 568 residues long: General O-oligosaccharyltransferase (568 aa).

A run of 12 helical transmembrane segments spans residues 17–37, 46–66, 78–98, 101–121, 132–152, 176–196, 214–234, 251–271, 349–369, 376–396, 397–417, and 429–449; these read VAVM…LAWL, LTFA…ALFL, LALP…VVDF, ALLS…GYNL, FTLS…IACI, FAQP…CLYL, IVFA…LFFI, YAVL…PRFT, LLVW…LIWI, AKTT…IHTL, LEYP…MGLI, and VPVS…ALIW.

This sequence belongs to the PglL O-oligosaccharyltransferase family.

It is found in the cell membrane. In terms of biological role, catalyzes the O-glycosylation of multiple protein targets. Is responsible for general protein glycosylation within A.baylyi ADP1. Does not act as an O-antigen ligase. This is General O-oligosaccharyltransferase from Acinetobacter baylyi (strain ATCC 33305 / BD413 / ADP1).